Here is a 419-residue protein sequence, read N- to C-terminus: Glutamate dehydrogenase (419 aa).

Lysine 105 is an active-site residue. An NAD(+)-binding site is contributed by 219 to 225; sequence GYGNAGY.

It belongs to the Glu/Leu/Phe/Val dehydrogenases family. As to quaternary structure, homohexamer.

It localises to the cytoplasm. The catalysed reaction is L-glutamate + NAD(+) + H2O = 2-oxoglutarate + NH4(+) + NADH + H(+). The enzyme catalyses L-glutamate + NADP(+) + H2O = 2-oxoglutarate + NH4(+) + NADPH + H(+). This Thermococcus litoralis (strain ATCC 51850 / DSM 5473 / JCM 8560 / NS-C) protein is Glutamate dehydrogenase (gdhA).